A 157-amino-acid chain; its full sequence is Lipoprotein signal peptidase (157 aa).

The next 4 helical transmembrane spans lie at 10 to 30, 36 to 56, 58 to 78, and 84 to 104; these read LVFI…KHAI, YESL…FSLL, FLEG…FIFL, and LFKN…SNVL. Catalysis depends on residues Asp114 and Asp131. A helical transmembrane segment spans residues 122–142; sequence FDFAIFNFADVMIDVGVGVLL.

It belongs to the peptidase A8 family.

Its subcellular location is the cell inner membrane. The enzyme catalyses Release of signal peptides from bacterial membrane prolipoproteins. Hydrolyzes -Xaa-Yaa-Zaa-|-(S,diacylglyceryl)Cys-, in which Xaa is hydrophobic (preferably Leu), and Yaa (Ala or Ser) and Zaa (Gly or Ala) have small, neutral side chains.. It participates in protein modification; lipoprotein biosynthesis (signal peptide cleavage). Functionally, this protein specifically catalyzes the removal of signal peptides from prolipoproteins. The polypeptide is Lipoprotein signal peptidase (Helicobacter pylori (strain P12)).